Reading from the N-terminus, the 428-residue chain is Enolase (428 aa).

Gln163 lines the (2R)-2-phosphoglycerate pocket. The Proton donor role is filled by Glu205. Residues Asp242, Glu283, and Asp310 each coordinate Mg(2+). Lys335, Arg364, Ser365, and Lys386 together coordinate (2R)-2-phosphoglycerate. Lys335 functions as the Proton acceptor in the catalytic mechanism.

Belongs to the enolase family. Mg(2+) serves as cofactor.

The protein localises to the cytoplasm. It localises to the secreted. The protein resides in the cell surface. It catalyses the reaction (2R)-2-phosphoglycerate = phosphoenolpyruvate + H2O. It participates in carbohydrate degradation; glycolysis; pyruvate from D-glyceraldehyde 3-phosphate: step 4/5. Its function is as follows. Catalyzes the reversible conversion of 2-phosphoglycerate (2-PG) into phosphoenolpyruvate (PEP). It is essential for the degradation of carbohydrates via glycolysis. The chain is Enolase from Streptomyces avermitilis (strain ATCC 31267 / DSM 46492 / JCM 5070 / NBRC 14893 / NCIMB 12804 / NRRL 8165 / MA-4680).